We begin with the raw amino-acid sequence, 144 residues long: Large ribosomal subunit protein uL15 (144 aa).

The tract at residues 1–54 (MRLNTLSPAEGSKKAGKRLGRGIGSGLGKTGGRGHKGQKSRSGGGVRRGFEGGQ) is disordered. Residues 21–31 (RGIGSGLGKTG) are compositionally biased toward gly residues.

Belongs to the universal ribosomal protein uL15 family. In terms of assembly, part of the 50S ribosomal subunit.

Functionally, binds to the 23S rRNA. This Salmonella arizonae (strain ATCC BAA-731 / CDC346-86 / RSK2980) protein is Large ribosomal subunit protein uL15.